A 275-amino-acid chain; its full sequence is Intercellular adhesion molecule 2 (275 aa).

The signal sequence occupies residues 1–24 (MSSFSYRTLTVALFALICCPGSDE). Topologically, residues 25–223 (KVFEVHVRPK…EIYEPVSDSQ (199 aa)) are extracellular. An Ig-like C2-type 1 domain is found at 41–98 (KGSLKVNCSTTCNQPEVGGLETSLDKILLDEQAQWKHYLVSNISHDTVLQCHFTCSGK). Residues asparagine 47, asparagine 82, asparagine 105, asparagine 153, asparagine 176, and asparagine 187 are each glycosylated (N-linked (GlcNAc...) asparagine). Intrachain disulfides connect cysteine 48–cysteine 91 and cysteine 52–cysteine 95. Residues 127-197 (GKSFTIECRV…FSCLAVLDLM (71 aa)) form the Ig-like C2-type 2 domain. The cysteines at positions 134 and 190 are disulfide-linked. Residues 224–248 (MVIIVTVVSVLLSLFVTSVLLCFIF) traverse the membrane as a helical segment. At 249–275 (GQHLRQQRMGTYGVRAAWRRLPQAFRP) the chain is on the cytoplasmic side. The required for interaction with EZR, MSN and RDX and co-localization to microvilli stretch occupies residues 251–275 (HLRQQRMGTYGVRAAWRRLPQAFRP).

The protein belongs to the immunoglobulin superfamily. ICAM family. As to quaternary structure, interacts with RDX, EZR and MSN.

The protein localises to the membrane. Its subcellular location is the cell projection. It is found in the microvillus. Functionally, ICAM proteins are ligands for the leukocyte adhesion protein LFA-1 (integrin alpha-L/beta-2). ICAM2 may play a role in lymphocyte recirculation by blocking LFA-1-dependent cell adhesion. It mediates adhesive interactions important for antigen-specific immune response, NK-cell mediated clearance, lymphocyte recirculation, and other cellular interactions important for immune response and surveillance. This is Intercellular adhesion molecule 2 (ICAM2) from Pan troglodytes (Chimpanzee).